The following is a 208-amino-acid chain: Transmembrane emp24 domain-containing protein p24beta2 (208 aa).

A signal peptide spans 1 to 21; sequence MSLKGTIVLLGLLWSFQATLG. Residues 22 to 176 are Lumenal-facing; the sequence is IRFVIDREEC…ENMSKRAVHK (155 aa). Positions 29–116 constitute a GOLD domain; the sequence is EECFSHKAEY…HETIDFDVQL (88 aa). Residues 134 to 149 adopt a coiled-coil conformation; sequence LMEQISKLEEALYNIQ. A glycan (N-linked (GlcNAc...) asparagine) is linked at asparagine 168. Residues 177 to 195 form a helical membrane-spanning segment; that stretch reads ALFESFALIGASFLQVYLL. The Cytoplasmic portion of the chain corresponds to 196–208; sequence RRLFERKLGMSRV. The COPII vesicle coat-binding motif lies at 198–199; that stretch reads LF. Positions 198-208 match the COPI vesicle coat-binding motif; that stretch reads LFERKLGMSRV. A Required for the export from the endoplasmic reticulum to the Golgi motif is present at residues 207–208; that stretch reads RV.

Belongs to the EMP24/GP25L family. In terms of assembly, probably oligomerizes with other members of the EMP24/GP25L family. Associates with the COPI vesicle coat (coatomer). Associates with the COPII vesicle coat (coatomer). Interacts with p24delta5.

It is found in the golgi apparatus. The protein localises to the cis-Golgi network membrane. The protein resides in the golgi stack membrane. Involved in vesicular protein trafficking. Mainly functions in the early secretory pathway but also in post-Golgi membranes. Thought to act as cargo receptor at the lumenal side for incorporation of secretory cargo molecules into transport vesicles and to be involved in vesicle coat formation at the cytoplasmic side. Interacts with p24delta5 at endoplasmic reticulum export sites for endoplasmic reticulum exit and coupled transport to the Golgi apparatus. This is Transmembrane emp24 domain-containing protein p24beta2 from Arabidopsis thaliana (Mouse-ear cress).